A 428-amino-acid polypeptide reads, in one-letter code: UPF0053 inner membrane protein YfjD (428 aa).

Residues 1 to 3 (MEH) lie on the Cytoplasmic side of the membrane. The CNNM transmembrane domain maps to 2–192 (EHISTTTLII…SQISRRNQDM (191 aa)). A helical transmembrane segment spans residues 4–24 (ISTTTLIIILIIMVVISAYFS). The Periplasmic segment spans residues 25 to 64 (GSETGMMTLNRYRLRHMAKQGNRSAKRVEKLLRKPDRLIS). A helical transmembrane segment spans residues 65–85 (LVLIGNNLVNILASALGTIVG). The Cytoplasmic portion of the chain corresponds to 86–91 (MRLYGD). Residues 92–112 (AGVAIATGVLTFVVLVFAEVL) form a helical membrane-spanning segment. Topologically, residues 113–129 (PKTIAALYPEKVAYPSS) are periplasmic. The chain crosses the membrane as a helical span at residues 130–150 (FLLAPLQILMMPLVWLLNAIT). Topologically, residues 151-428 (RMLMRMMGIK…VKPLRESVAE (278 aa)) are cytoplasmic. CBS domains follow at residues 208–270 (MVPR…FTKE) and 272–332 (MLRA…FTTS).

Belongs to the UPF0053 family.

It localises to the cell inner membrane. The polypeptide is UPF0053 inner membrane protein YfjD (yfjD) (Escherichia coli (strain K12)).